A 288-amino-acid chain; its full sequence is MHFLSPAKLNLFLQILGRREDDFHEIVTRYQAIAFGDQLSLSISSRDSLQVINACHLETPSNSIWKSVALFRRYTGITTPVSWRVVKQIPVGAGLAGGSSNAATALFALNQIFKTGLSDEEMRSLAEQIGMDTPFFFSTGAALGVARGEKIIALEESVSDRYVLYFSSEGVLTSRAFAVVQPSDCSSRKNLEYTQNDLEKPVFRLRLDLKEKKHWLESLWAELPVHIGLTGSGATLFVRYPEILEEDPSYAAQIQRAVTLSGGLLTSPIRRDPTAWYSIYSESALAAT.

K8 is an active-site residue. ATP is bound at residue 90–100 (PVGAGLAGGSS). D132 is an active-site residue.

This sequence belongs to the GHMP kinase family. IspE subfamily.

It carries out the reaction 4-CDP-2-C-methyl-D-erythritol + ATP = 4-CDP-2-C-methyl-D-erythritol 2-phosphate + ADP + H(+). Its pathway is isoprenoid biosynthesis; isopentenyl diphosphate biosynthesis via DXP pathway; isopentenyl diphosphate from 1-deoxy-D-xylulose 5-phosphate: step 3/6. In terms of biological role, catalyzes the phosphorylation of the position 2 hydroxy group of 4-diphosphocytidyl-2C-methyl-D-erythritol. In Chlamydia trachomatis serovar L2b (strain UCH-1/proctitis), this protein is 4-diphosphocytidyl-2-C-methyl-D-erythritol kinase.